Here is a 491-residue protein sequence, read N- to C-terminus: Zinc finger and SCAN domain-containing protein 22 (491 aa).

The residue at position 9 (Ser9) is a Phosphoserine. Residues Arg49–Leu131 enclose the SCAN box domain. 2 disordered regions span residues Arg134–Thr161 and Phe204–Asp249. Over residues Val214–Gly224 the composition is skewed to basic and acidic residues. The span at Ala225 to Lys241 shows a compositional bias: polar residues. 8 consecutive C2H2-type zinc fingers follow at residues Ser268 to His290, Tyr296 to His318, His324 to His346, Tyr352 to His374, Tyr380 to His402, Tyr408 to His430, Tyr436 to His458, and Tyr464 to His486. Lys443 is covalently cross-linked (Glycyl lysine isopeptide (Lys-Gly) (interchain with G-Cter in SUMO2)).

The protein belongs to the krueppel C2H2-type zinc-finger protein family.

Its subcellular location is the nucleus. In terms of biological role, may be involved in transcriptional regulation. In Homo sapiens (Human), this protein is Zinc finger and SCAN domain-containing protein 22 (ZSCAN22).